Consider the following 161-residue polypeptide: ATP synthase subunit b (161 aa).

Residues 2-22 (VIEWGTALYQLLAFAVLLLIL) traverse the membrane as a helical segment.

It belongs to the ATPase B chain family. F-type ATPases have 2 components, F(1) - the catalytic core - and F(0) - the membrane proton channel. F(1) has five subunits: alpha(3), beta(3), gamma(1), delta(1), epsilon(1). F(0) has three main subunits: a(1), b(2) and c(10-14). The alpha and beta chains form an alternating ring which encloses part of the gamma chain. F(1) is attached to F(0) by a central stalk formed by the gamma and epsilon chains, while a peripheral stalk is formed by the delta and b chains.

The protein resides in the cell membrane. Functionally, f(1)F(0) ATP synthase produces ATP from ADP in the presence of a proton or sodium gradient. F-type ATPases consist of two structural domains, F(1) containing the extramembraneous catalytic core and F(0) containing the membrane proton channel, linked together by a central stalk and a peripheral stalk. During catalysis, ATP synthesis in the catalytic domain of F(1) is coupled via a rotary mechanism of the central stalk subunits to proton translocation. Its function is as follows. Component of the F(0) channel, it forms part of the peripheral stalk, linking F(1) to F(0). The polypeptide is ATP synthase subunit b (Shouchella clausii (strain KSM-K16) (Alkalihalobacillus clausii)).